The sequence spans 945 residues: UvrABC system protein A (945 aa).

31 to 38 (GLSGSGKS) provides a ligand contact to ATP. Residues 254 to 281 (CPVCGHSISELEPKLFSFNNPAGACPTC) form a C4-type zinc finger. 2 ABC transporter domains span residues 310-587 (WDRR…PDSL) and 607-937 (RDKK…HFLK). An ATP-binding site is contributed by 640–647 (GVSGSGKS). The segment at 740-766 (CEACQGDGVIKVEMHFLPDIYVPCDVC) adopts a C4-type zinc-finger fold.

The protein belongs to the ABC transporter superfamily. UvrA family. Forms a heterotetramer with UvrB during the search for lesions.

The protein resides in the cytoplasm. Its function is as follows. The UvrABC repair system catalyzes the recognition and processing of DNA lesions. UvrA is an ATPase and a DNA-binding protein. A damage recognition complex composed of 2 UvrA and 2 UvrB subunits scans DNA for abnormalities. When the presence of a lesion has been verified by UvrB, the UvrA molecules dissociate. This Pseudomonas aeruginosa (strain ATCC 15692 / DSM 22644 / CIP 104116 / JCM 14847 / LMG 12228 / 1C / PRS 101 / PAO1) protein is UvrABC system protein A.